A 452-amino-acid polypeptide reads, in one-letter code: Gastrin/cholecystokinin type B receptor (452 aa).

Positions 1–21 (MELLKLNRSVQGPGPGSGSSL) are disordered. At 1 to 57 (MELLKLNRSVQGPGPGSGSSLCRPGVSLLNSSSAGNLSCDPPRIRGTGTRELEMAIR) the chain is on the extracellular side. 3 N-linked (GlcNAc...) asparagine glycosylation sites follow: Asn7, Asn30, and Asn36. The chain crosses the membrane as a helical span at residues 58–79 (ITLYAVIFLMSVGGNVLIIVVL). Residues 80-87 (GLSRRLRT) lie on the Cytoplasmic side of the membrane. The helical transmembrane segment at 88–109 (VTNAFLLSLAVSDLLLAVACMP) threads the bilayer. The Extracellular segment spans residues 110-131 (FTLLPNLMGTFIFGTVICKAIS). Cysteines 127 and 205 form a disulfide. Residues 132 to 150 (YLMGVSVSVSTLNLVAIAL) traverse the membrane as a helical segment. At 151–170 (ERYSAICRPLQARVWQTRSH) the chain is on the cytoplasmic side. Residues 171-189 (AARVILATWLLSGLLMVPY) traverse the membrane as a helical segment. Residues 190-219 (PVYTMVQPVGPRVLQCMHRWPSARVQQTWS) are Extracellular-facing. A helical transmembrane segment spans residues 220–242 (VLLLLLLFFIPGVVIAVAYGLIS). The Cytoplasmic portion of the chain corresponds to 243-338 (RELYLGLHFD…KLLAKKRVVR (96 aa)). Residues 257–286 (SETQSRARNQGGLPGGAAPGPVHQNGGCRP) form a disordered region. The chain crosses the membrane as a helical span at residues 339 to 360 (MLLVIVLLFFLCWLPVYSVNTW). Topologically, residues 361-378 (RAFDGPGAQRALSGAPIS) are extracellular. The chain crosses the membrane as a helical span at residues 379 to 399 (FIHLLSYVSACVNPLVYCFMH). Residues 400-452 (RRFRQACLDTCARCCPRPPRARPQPLPDEDPPTPSIASLSRLSYTTISTLGPG) lie on the Cytoplasmic side of the membrane. The S-palmitoyl cysteine moiety is linked to residue Cys413. Residues 421–452 (RPQPLPDEDPPTPSIASLSRLSYTTISTLGPG) are disordered. Over residues 434-452 (SIASLSRLSYTTISTLGPG) the composition is skewed to polar residues.

Belongs to the G-protein coupled receptor 1 family. In terms of tissue distribution, parietal cells, pancreas, brain and various neoplastic tissues.

Its subcellular location is the cell membrane. Its function is as follows. Receptor for gastrin and cholecystokinin. The CCK-B receptors occur throughout the central nervous system where they modulate anxiety, analgesia, arousal, and neuroleptic activity. This receptor mediates its action by association with G proteins that activate a phosphatidylinositol-calcium second messenger system. The polypeptide is Gastrin/cholecystokinin type B receptor (Cckbr) (Rattus norvegicus (Rat)).